The following is a 530-amino-acid chain: G2/mitotic-specific cyclin-B (530 aa).

Residues Ala76–Asn152 are disordered. Low complexity predominate over residues Pro121–Pro144. Ser137 carries the post-translational modification Phosphoserine.

The protein belongs to the cyclin family. Cyclin AB subfamily. Interacts with the protein kinase Cdk1 to form a serine/threonine kinase holoenzyme complex also known as maturation promoting factor (MPF). The cyclin subunit imparts substrate specificity to the complex.

In terms of biological role, essential for the control of the cell cycle at the G2/M (mitosis) transition. In Drosophila melanogaster (Fruit fly), this protein is G2/mitotic-specific cyclin-B (CycB).